We begin with the raw amino-acid sequence, 849 residues long: uncharacterized protein (849 aa).

2 helical membrane-spanning segments follow: residues 587-607 and 620-640; these read VALG…LGLF and AGIL…TGDW.

The protein localises to the cell membrane. This is an uncharacterized protein from Methanocaldococcus jannaschii (strain ATCC 43067 / DSM 2661 / JAL-1 / JCM 10045 / NBRC 100440) (Methanococcus jannaschii).